The chain runs to 444 residues: tRNA-2-methylthio-N(6)-dimethylallyladenosine synthase (444 aa).

The 117-residue stretch at 4 to 120 folds into the MTTase N-terminal domain; that stretch reads PTYYTITFGC…LGDLLAQVEA (117 aa). [4Fe-4S] cluster-binding residues include C13, C49, C83, C155, C159, and C162. Positions 141–372 constitute a Radical SAM core domain; the sequence is RDSQVTAWIN…RLVAEVAAAR (232 aa). Residues 374 to 438 form the TRAM domain; that stretch reads ARLLGQVQEV…AFSLTGEAVT (65 aa).

This sequence belongs to the methylthiotransferase family. MiaB subfamily. As to quaternary structure, monomer. [4Fe-4S] cluster is required as a cofactor.

Its subcellular location is the cytoplasm. The enzyme catalyses N(6)-dimethylallyladenosine(37) in tRNA + (sulfur carrier)-SH + AH2 + 2 S-adenosyl-L-methionine = 2-methylsulfanyl-N(6)-dimethylallyladenosine(37) in tRNA + (sulfur carrier)-H + 5'-deoxyadenosine + L-methionine + A + S-adenosyl-L-homocysteine + 2 H(+). Its function is as follows. Catalyzes the methylthiolation of N6-(dimethylallyl)adenosine (i(6)A), leading to the formation of 2-methylthio-N6-(dimethylallyl)adenosine (ms(2)i(6)A) at position 37 in tRNAs that read codons beginning with uridine. The protein is tRNA-2-methylthio-N(6)-dimethylallyladenosine synthase of Synechococcus sp. (strain JA-2-3B'a(2-13)) (Cyanobacteria bacterium Yellowstone B-Prime).